We begin with the raw amino-acid sequence, 375 residues long: UDP-N-acetylglucosamine--N-acetylmuramyl-(pentapeptide) pyrophosphoryl-undecaprenol N-acetylglucosamine transferase (375 aa).

Residues 13 to 15, Asn124, Arg165, Ser193, and Gln294 contribute to the UDP-N-acetyl-alpha-D-glucosamine site; that span reads TGG.

The protein belongs to the glycosyltransferase 28 family. MurG subfamily.

It localises to the cell inner membrane. The enzyme catalyses di-trans,octa-cis-undecaprenyl diphospho-N-acetyl-alpha-D-muramoyl-L-alanyl-D-glutamyl-meso-2,6-diaminopimeloyl-D-alanyl-D-alanine + UDP-N-acetyl-alpha-D-glucosamine = di-trans,octa-cis-undecaprenyl diphospho-[N-acetyl-alpha-D-glucosaminyl-(1-&gt;4)]-N-acetyl-alpha-D-muramoyl-L-alanyl-D-glutamyl-meso-2,6-diaminopimeloyl-D-alanyl-D-alanine + UDP + H(+). It participates in cell wall biogenesis; peptidoglycan biosynthesis. Cell wall formation. Catalyzes the transfer of a GlcNAc subunit on undecaprenyl-pyrophosphoryl-MurNAc-pentapeptide (lipid intermediate I) to form undecaprenyl-pyrophosphoryl-MurNAc-(pentapeptide)GlcNAc (lipid intermediate II). In Mesorhizobium japonicum (strain LMG 29417 / CECT 9101 / MAFF 303099) (Mesorhizobium loti (strain MAFF 303099)), this protein is UDP-N-acetylglucosamine--N-acetylmuramyl-(pentapeptide) pyrophosphoryl-undecaprenol N-acetylglucosamine transferase.